The primary structure comprises 307 residues: tRNA dimethylallyltransferase 2 (307 aa).

An ATP-binding site is contributed by 9–16; sequence GPTAVGKT. Residue 11–16 coordinates substrate; that stretch reads TAVGKT. Residues 34 to 37 are interaction with substrate tRNA; sequence DSRQ.

The protein belongs to the IPP transferase family. As to quaternary structure, monomer. It depends on Mg(2+) as a cofactor.

It catalyses the reaction adenosine(37) in tRNA + dimethylallyl diphosphate = N(6)-dimethylallyladenosine(37) in tRNA + diphosphate. In terms of biological role, catalyzes the transfer of a dimethylallyl group onto the adenine at position 37 in tRNAs that read codons beginning with uridine, leading to the formation of N6-(dimethylallyl)adenosine (i(6)A). The chain is tRNA dimethylallyltransferase 2 from Azobacteroides pseudotrichonymphae genomovar. CFP2.